The primary structure comprises 124 residues: MAITKEELLDYIGGLSVLELSELVKAFEEKFGVSAAPTVVAGAGAGVAAAAVEEKTEFDVILLDGGEKKINVIKVVRELTGLGLKEAKDAVEKTPTTIKEGANKDDAAAMKAKLEEAGAKVEIK.

Belongs to the bacterial ribosomal protein bL12 family. As to quaternary structure, homodimer. Part of the ribosomal stalk of the 50S ribosomal subunit. Forms a multimeric L10(L12)X complex, where L10 forms an elongated spine to which 2 to 4 L12 dimers bind in a sequential fashion. Binds GTP-bound translation factors.

Its function is as follows. Forms part of the ribosomal stalk which helps the ribosome interact with GTP-bound translation factors. Is thus essential for accurate translation. In Wolinella succinogenes (strain ATCC 29543 / DSM 1740 / CCUG 13145 / JCM 31913 / LMG 7466 / NCTC 11488 / FDC 602W) (Vibrio succinogenes), this protein is Large ribosomal subunit protein bL12.